Here is a 38-residue protein sequence, read N- to C-terminus: Photosystem II reaction center protein L (38 aa).

A helical membrane pass occupies residues 17 to 37 (SLFLGRLLIFVLGILFSSYIF).

The protein belongs to the PsbL family. PSII is composed of 1 copy each of membrane proteins PsbA, PsbB, PsbC, PsbD, PsbE, PsbF, PsbH, PsbI, PsbJ, PsbK, PsbL, PsbM, PsbT, PsbX, PsbY, PsbZ, Psb30/Ycf12, peripheral proteins PsbO, CyanoQ (PsbQ), PsbU, PsbV and a large number of cofactors. It forms dimeric complexes.

The protein localises to the cellular thylakoid membrane. Functionally, one of the components of the core complex of photosystem II (PSII). PSII is a light-driven water:plastoquinone oxidoreductase that uses light energy to abstract electrons from H(2)O, generating O(2) and a proton gradient subsequently used for ATP formation. It consists of a core antenna complex that captures photons, and an electron transfer chain that converts photonic excitation into a charge separation. This subunit is found at the monomer-monomer interface and is required for correct PSII assembly and/or dimerization. This is Photosystem II reaction center protein L from Prochlorothrix hollandica.